We begin with the raw amino-acid sequence, 197 residues long: Negative modulator of initiation of replication (197 aa).

It belongs to the SeqA family. Homodimer. Polymerizes to form helical filaments.

It localises to the cytoplasm. In terms of biological role, negative regulator of replication initiation, which contributes to regulation of DNA replication and ensures that replication initiation occurs exactly once per chromosome per cell cycle. Binds to pairs of hemimethylated GATC sequences in the oriC region, thus preventing assembly of replication proteins and re-initiation at newly replicated origins. Repression is relieved when the region becomes fully methylated. The protein is Negative modulator of initiation of replication of Pseudoalteromonas translucida (strain TAC 125).